The primary structure comprises 1765 residues: Sodium channel protein type 11 subunit alpha (1765 aa).

The Cytoplasmic segment spans residues 1–126 (MEERYYPVIF…PLRSLMIRIS (126 aa)). An I repeat occupies 115–403 (FNPLRSLMIR…VTMAYEEQNR (289 aa)). A helical membrane pass occupies residues 127–148 (VHSVFSMFIICTVIINCMFMAN). The Extracellular portion of the chain corresponds to 149–157 (SMERSFDND). A helical membrane pass occupies residues 158-177 (IPEYVFIGIYILEAVIKILA). Residues 178–189 (RGFIVDEFSFLR) lie on the Cytoplasmic side of the membrane. A helical transmembrane segment spans residues 190 to 209 (DPWNWLDFIVIGTAIATCFP). The Extracellular portion of the chain corresponds to 210-216 (GSQVNLS). N-linked (GlcNAc...) asparagine glycosylation is present at asparagine 214. Residues 217–236 (ALRTFRVFRALKAISVISGL) traverse the membrane as a helical; Voltage-sensor segment. At 237–252 (KVIVGALLRSVKKLVD) the chain is on the cytoplasmic side. A helical membrane pass occupies residues 253–266 (VMVLTLFCLSIFAL). The Extracellular segment spans residues 267 to 339 (VGQQLFMGIL…PDNNYTKFDN (73 aa)). A disulfide bridge links cysteine 280 with cysteine 317. N-linked (GlcNAc...) asparagine glycans are attached at residues asparagine 319 and asparagine 333. An intramembrane region (pore-forming) is located at residues 340-364 (FGWSFLAMFRVMTQDSWERLYRQIL). Residues 365 to 371 (RTSGIYF) lie on the Extracellular side of the membrane. Residues 372–397 (VFFFVVVIFLGSFYLLNLTLAVVTMA) form a helical membrane-spanning segment. The Cytoplasmic segment spans residues 398 to 567 (YEEQNRNVAA…WLCIKKVLRT (170 aa)). The II repeat unit spans residues 554-820 (CSPQWLCIKK…EGETRKTKVQ (267 aa)). The helical transmembrane segment at 568 to 591 (IMTDPFTELAITICIIINTVFLAV) threads the bilayer. Topologically, residues 592-602 (EHHNMDDNLKT) are extracellular. The helical transmembrane segment at 603 to 626 (ILKIGNWVFTGIFIAEMCLKIIAL) threads the bilayer. At 627–634 (DPYHYFRH) the chain is on the cytoplasmic side. Residues 635–656 (GWNVFDSIVALLSLADVLYNTL) form a helical membrane-spanning segment. Residues 657-662 (SDNNRS) lie on the Extracellular side of the membrane. An N-linked (GlcNAc...) asparagine glycan is attached at asparagine 660. Residues 663–682 (FLASLRVLRVFKLAKSWPTL) form a helical; Voltage-sensor membrane-spanning segment. Residues 683–697 (NTLIKIIGHSVGALG) are Cytoplasmic-facing. The chain crosses the membrane as a helical span at residues 698-720 (NLTVVLTIVVFIFSVVGMRLFGT). The Extracellular segment spans residues 721–741 (KFNKTAYATQERPRRRWHMDN). An N-linked (GlcNAc...) asparagine glycan is attached at asparagine 723. Residues 742–762 (FYHSFLVVFRILCGEWIENMW) constitute an intramembrane region (pore-forming). The Extracellular segment spans residues 763 to 772 (GCMQDMDGSP). Cysteines 764 and 774 form a disulfide. Residues 773-798 (LCIIVFVLIMVIGKLVVLNLFIALLL) form a helical membrane-spanning segment. The Cytoplasmic segment spans residues 799–1029 (NSFSNEEKDG…WWNIRKTCYQ (231 aa)). One copy of the III repeat lies at 1022–1319 (NIRKTCYQIV…KKYYNAMKKL (298 aa)). A helical transmembrane segment spans residues 1030-1052 (IVKHSWFESFIIFVILLSSGALI). The Extracellular portion of the chain corresponds to 1053 to 1066 (FEDVNLPSRPQVEK). Residues 1067–1092 (LLRCTDNIFTFIFLLEMILKWVAFGF) traverse the membrane as a helical segment. Over 1093–1098 (RRYFTS) the chain is Cytoplasmic. Residues 1099–1116 (AWCWLDFLIVVVSVLSLM) traverse the membrane as a helical segment. Position 1117 (asparagine 1117) is a topological domain, extracellular. Residues 1118 to 1139 (LPSLKSFRTLRALRPLRALSQF) form a helical; Voltage-sensor membrane-spanning segment. Topologically, residues 1140 to 1158 (EGMKVVVYALISAIPAILN) are cytoplasmic. A helical transmembrane segment spans residues 1159-1180 (VLLVCLIFWLVFCILGVNLFSG). Residues 1181-1223 (KFGRCINGTDINMYLDFTEVPNRSQCNISNYSWKVPQVNFDNV) lie on the Extracellular side of the membrane. Residues asparagine 1187, asparagine 1202, asparagine 1207, and asparagine 1210 are each glycosylated (N-linked (GlcNAc...) asparagine). Residues 1224–1245 (GNAYLALLQVATYKGWLEIMNA) constitute an intramembrane region (pore-forming). At 1246 to 1261 (AVDSREKDEQPDFEAN) the chain is on the extracellular side. A helical membrane pass occupies residues 1262–1288 (LYAYLYFVVFIIFGSFFTLNLFIGVII). Topologically, residues 1289–1341 (DNFNQQQKKLGGQDIFMTEEQKKYYNAMKKLGTKKPQKPIPRPLNKCQAFVFD) are cytoplasmic. The IV repeat unit spans residues 1328–1619 (IPRPLNKCQA…WEKFDPEASQ (292 aa)). Residues 1342–1365 (LVTSQVFDVIILGLIVLNMIIMMA) traverse the membrane as a helical segment. The Extracellular segment spans residues 1366–1376 (ESADQPKDVKK). The helical transmembrane segment at 1377-1400 (TFDILNIAFVVIFTIECLIKVFAL) threads the bilayer. The Cytoplasmic segment spans residues 1401–1406 (RQHYFT). Residues 1407–1430 (NGWNLFDCVVVVLSIISTLVSRLE) traverse the membrane as a helical segment. Residues 1431 to 1440 (DSDISFPPTL) are Extracellular-facing. A helical; Voltage-sensor membrane pass occupies residues 1441-1463 (FRVVRLARIGRILRLVRAARGIR). The Cytoplasmic segment spans residues 1464–1478 (TLLFALMMSLPSLFN). The chain crosses the membrane as a helical span at residues 1479–1501 (IGLLLFLVMFIYAIFGMSWFSKV). At 1502–1515 (KKGSGIDDIFNFET) the chain is on the extracellular side. Residues 1516–1538 (FTGSMLCLFQITTSAGWDTLLNP) constitute an intramembrane region (pore-forming). Over 1539–1559 (MLEAKEHCNSSSQDSCQQPQI) the chain is Extracellular. A glycan (N-linked (GlcNAc...) asparagine) is linked at asparagine 1547. The chain crosses the membrane as a helical span at residues 1560 to 1584 (AVVYFVSYIIISFLIVVNMYIAVIL). Over 1585-1765 (ENFNTATEES…DVAKVKVHND (181 aa)) the chain is Cytoplasmic.

The protein belongs to the sodium channel (TC 1.A.1.10) family. Nav1.9/SCN11A subfamily. The voltage-resistant sodium channel consists of an ion conducting pore forming alpha-subunit regulated by one or more auxiliary subunits SCN1B, SCN2B and SCN3B. Expressed (at protein level) in myenteric sensory neurons. Expressed in small sensory neurons of the dorsal root ganglia (C-fiber neurons) and trigeminal ganglia.

It is found in the cell membrane. The catalysed reaction is Na(+)(in) = Na(+)(out). Its activity is regulated as follows. Activity is not sensitive to inhibition by tetrodotoxin. In terms of biological role, sodium channel mediating the voltage-dependent sodium ion permeability of excitable membranes. Assuming opened or closed conformations in response to the voltage difference across the membrane, the protein forms a sodium-selective channel through which sodium ions may pass in accordance with their electrochemical gradient. Involved in membrane depolarization during action potential in nociceptors which function as key relay stations for the electrical transmission of pain signals from the periphery to the central nervous system. Also involved in rapid BDNF-evoked neuronal depolarization. In Rattus norvegicus (Rat), this protein is Sodium channel protein type 11 subunit alpha.